The primary structure comprises 319 residues: Thioredoxin reductase (319 aa).

Residues 11–14 (SGPA), 40–41 (IA), Gln-45, Asn-54, Cys-145, Asp-288, and 295–297 (RQA) each bind FAD. Cys-142 and Cys-145 are joined by a disulfide.

The protein belongs to the class-II pyridine nucleotide-disulfide oxidoreductase family. As to quaternary structure, homodimer. It depends on FAD as a cofactor.

Its subcellular location is the cytoplasm. It carries out the reaction [thioredoxin]-dithiol + NADP(+) = [thioredoxin]-disulfide + NADPH + H(+). The chain is Thioredoxin reductase (TRR1) from Candida glabrata (strain ATCC 2001 / BCRC 20586 / JCM 3761 / NBRC 0622 / NRRL Y-65 / CBS 138) (Yeast).